The following is a 138-amino-acid chain: Large ribosomal subunit protein uL16 (138 aa).

This sequence belongs to the universal ribosomal protein uL16 family. In terms of assembly, part of the 50S ribosomal subunit.

Its function is as follows. Binds 23S rRNA and is also seen to make contacts with the A and possibly P site tRNAs. In Ureaplasma parvum serovar 3 (strain ATCC 27815 / 27 / NCTC 11736), this protein is Large ribosomal subunit protein uL16.